The sequence spans 134 residues: Small ribosomal subunit protein uS9 (134 aa).

A disordered region spans residues 113 to 134 (REVERKKYGLKKARRAPQFSKR). Positions 120–134 (YGLKKARRAPQFSKR) are enriched in basic residues.

It belongs to the universal ribosomal protein uS9 family.

This chain is Small ribosomal subunit protein uS9, found in Thermotoga petrophila (strain ATCC BAA-488 / DSM 13995 / JCM 10881 / RKU-1).